The sequence spans 78 residues: Large ribosomal subunit protein bL28 (78 aa).

The disordered stretch occupies residues 1–21 (MSRVCQVTGKSPITGNNVSHA). Positions 8-21 (TGKSPITGNNVSHA) are enriched in polar residues.

Belongs to the bacterial ribosomal protein bL28 family.

This Hahella chejuensis (strain KCTC 2396) protein is Large ribosomal subunit protein bL28.